The sequence spans 609 residues: Glutamine--fructose-6-phosphate aminotransferase [isomerizing] (609 aa).

C2 (nucleophile; for GATase activity) is an active-site residue. In terms of domain architecture, Glutamine amidotransferase type-2 spans 2–218; it reads CGIVGAIAQR…EGDIAEITRR (217 aa). SIS domains follow at residues 286–426 and 458–599; these read ADEL…LKGL and LAED…VDQP. The For Fru-6P isomerization activity role is filled by K604.

As to quaternary structure, homodimer.

It localises to the cytoplasm. It catalyses the reaction D-fructose 6-phosphate + L-glutamine = D-glucosamine 6-phosphate + L-glutamate. In terms of biological role, catalyzes the first step in hexosamine metabolism, converting fructose-6P into glucosamine-6P using glutamine as a nitrogen source. The chain is Glutamine--fructose-6-phosphate aminotransferase [isomerizing] from Escherichia coli O157:H7.